A 145-amino-acid chain; its full sequence is MNSKKKIALVAHDNRKKALISWCEANSEVLSNHSLCGTGTTAKLIKEATGLEVFPYKSGPMGGDQQIGAAIVNEDIDFMIFFWDPLTAQPHDPDVKALLRISVLYDIPIAMNESTAEFLIKSPIMKEQHERHIIDYYQKIRKDNF.

Residues 1–145 form the MGS-like domain; the sequence is MNSKKKIALV…YYQKIRKDNF (145 aa). Residues His-12, Lys-16, 38-41, and 58-59 each bind substrate; these read TGTT and SG. The Proton donor/acceptor role is filled by Asp-64. Residue His-91 coordinates substrate.

This sequence belongs to the methylglyoxal synthase family.

The catalysed reaction is dihydroxyacetone phosphate = methylglyoxal + phosphate. Its function is as follows. Catalyzes the formation of methylglyoxal from dihydroxyacetone phosphate. The sequence is that of Methylglyoxal synthase from Clostridium acetobutylicum (strain ATCC 824 / DSM 792 / JCM 1419 / IAM 19013 / LMG 5710 / NBRC 13948 / NRRL B-527 / VKM B-1787 / 2291 / W).